The primary structure comprises 261 residues: 6-phosphogluconolactonase (261 aa).

It belongs to the glucosamine/galactosamine-6-phosphate isomerase family. 6-phosphogluconolactonase subfamily.

It catalyses the reaction 6-phospho-D-glucono-1,5-lactone + H2O = 6-phospho-D-gluconate + H(+). The protein operates within carbohydrate degradation; pentose phosphate pathway; D-ribulose 5-phosphate from D-glucose 6-phosphate (oxidative stage): step 2/3. Its function is as follows. Hydrolysis of 6-phosphogluconolactone to 6-phosphogluconate. The chain is 6-phosphogluconolactonase (pgl) from Streptomyces coelicolor (strain ATCC BAA-471 / A3(2) / M145).